A 490-amino-acid polypeptide reads, in one-letter code: Glutamyl-tRNA(Gln) amidotransferase subunit A (490 aa).

Active-site charge relay system residues include K76 and S151. S175 (acyl-ester intermediate) is an active-site residue.

Belongs to the amidase family. GatA subfamily. As to quaternary structure, heterotrimer of A, B and C subunits.

It carries out the reaction L-glutamyl-tRNA(Gln) + L-glutamine + ATP + H2O = L-glutaminyl-tRNA(Gln) + L-glutamate + ADP + phosphate + H(+). Allows the formation of correctly charged Gln-tRNA(Gln) through the transamidation of misacylated Glu-tRNA(Gln) in organisms which lack glutaminyl-tRNA synthetase. The reaction takes place in the presence of glutamine and ATP through an activated gamma-phospho-Glu-tRNA(Gln). This Methylobacillus flagellatus (strain ATCC 51484 / DSM 6875 / VKM B-1610 / KT) protein is Glutamyl-tRNA(Gln) amidotransferase subunit A.